A 101-amino-acid chain; its full sequence is Small ribosomal subunit protein uS14 (101 aa).

It belongs to the universal ribosomal protein uS14 family. Part of the 30S ribosomal subunit. Contacts proteins S3 and S10.

Its function is as follows. Binds 16S rRNA, required for the assembly of 30S particles and may also be responsible for determining the conformation of the 16S rRNA at the A site. The chain is Small ribosomal subunit protein uS14 from Paracoccus denitrificans (strain Pd 1222).